The sequence spans 1380 residues: DNA-directed RNA polymerase subunit beta (1380 aa).

The protein belongs to the RNA polymerase beta chain family. As to quaternary structure, the RNAP catalytic core consists of 2 alpha, 1 beta, 1 beta' and 1 omega subunit. When a sigma factor is associated with the core the holoenzyme is formed, which can initiate transcription.

It catalyses the reaction RNA(n) + a ribonucleoside 5'-triphosphate = RNA(n+1) + diphosphate. Functionally, DNA-dependent RNA polymerase catalyzes the transcription of DNA into RNA using the four ribonucleoside triphosphates as substrates. The polypeptide is DNA-directed RNA polymerase subunit beta (Sinorhizobium medicae (strain WSM419) (Ensifer medicae)).